The chain runs to 1005 residues: PDZ domain-containing protein 7 (1005 aa).

PDZ domains are found at residues 86-168 and 210-293; these read SVRV…RMGR and IVHL…ETGR. Disordered stretches follow at residues 353–378, 700–859, and 949–1005; these read PEEPGSRGPGWGRADTAMQTEPDAGG, VSPS…KTPS, and VRVP…ARLL. A compositionally biased stretch (basic residues) spans 770–786; it reads AQSRSRSRSRSRSRSRS. Over residues 787–799 the composition is skewed to low complexity; the sequence is SRGQGKSPGRRSP. The segment covering 989–998 has biased composition (pro residues); the sequence is PEPPTNPQTP.

Homodimerizes (via PDZ2 domain). Component of USH2 complex, composed of ADGRV1, PDZD7, USH2A and WHRN. Interacts (via PDZ domains) with WHRN; the interaction is direct. Interacts with USH1G. Interacts with ADGRV1 (via the cytoplasmic region). Interacts with USH2A (via the cytoplasmic region). Interacts with MYO7A (via MyTH4-FERM domains).

The protein resides in the cell projection. It is found in the cilium. Its subcellular location is the nucleus. It localises to the stereocilium. Its function is as follows. In cochlear developing hair cells, essential in organizing the USH2 complex at stereocilia ankle links. Blocks inhibition of adenylate cyclase activity mediated by ADGRV1. This is PDZ domain-containing protein 7 (PDZD7) from Pongo abelii (Sumatran orangutan).